The sequence spans 437 residues: Protein translocase subunit SecY (437 aa).

Helical transmembrane passes span 19–39, 68–88, 121–141, 156–176, 188–208, 218–238, 274–294, 317–337, 378–398, and 400–420; these read LFTLGIIVIYRLGAHIPAPGV, LLQITIFALGIMPYITASIIL, VALAILQGTGLVATARSGALF, IFTTIIMVLTMTAGTPPVMWL, GMSIPMFISIAATFPGALWAI, WIEFGTVILIGFVMVALVVFV, GVIPVIFASSLLYIPALIVQF, YIATYFVLIVFFAFFYVAISF, SLYLGLIALVPTMALAGFGGA, and QNFPFGGTSILIIVGVGLETV.

It belongs to the SecY/SEC61-alpha family. As to quaternary structure, component of the Sec protein translocase complex. Heterotrimer consisting of SecY, SecE and SecG subunits. The heterotrimers can form oligomers, although 1 heterotrimer is thought to be able to translocate proteins. Interacts with the ribosome. Interacts with SecDF, and other proteins may be involved. Interacts with SecA.

The protein localises to the cell membrane. In terms of biological role, the central subunit of the protein translocation channel SecYEG. Consists of two halves formed by TMs 1-5 and 6-10. These two domains form a lateral gate at the front which open onto the bilayer between TMs 2 and 7, and are clamped together by SecE at the back. The channel is closed by both a pore ring composed of hydrophobic SecY resides and a short helix (helix 2A) on the extracellular side of the membrane which forms a plug. The plug probably moves laterally to allow the channel to open. The ring and the pore may move independently. The polypeptide is Protein translocase subunit SecY (Streptomyces griseus).